Reading from the N-terminus, the 244-residue chain is NAD(P)H-quinone oxidoreductase subunit K (244 aa).

The [4Fe-4S] cluster site is built by cysteine 60, cysteine 61, cysteine 125, and cysteine 156.

The protein belongs to the complex I 20 kDa subunit family. As to quaternary structure, NDH-1 can be composed of about 15 different subunits; different subcomplexes with different compositions have been identified which probably have different functions. [4Fe-4S] cluster serves as cofactor.

The protein localises to the cellular thylakoid membrane. The catalysed reaction is a plastoquinone + NADH + (n+1) H(+)(in) = a plastoquinol + NAD(+) + n H(+)(out). It catalyses the reaction a plastoquinone + NADPH + (n+1) H(+)(in) = a plastoquinol + NADP(+) + n H(+)(out). Functionally, NDH-1 shuttles electrons from an unknown electron donor, via FMN and iron-sulfur (Fe-S) centers, to quinones in the respiratory and/or the photosynthetic chain. The immediate electron acceptor for the enzyme in this species is believed to be plastoquinone. Couples the redox reaction to proton translocation, and thus conserves the redox energy in a proton gradient. Cyanobacterial NDH-1 also plays a role in inorganic carbon-concentration. The chain is NAD(P)H-quinone oxidoreductase subunit K from Prochlorococcus marinus (strain AS9601).